The chain runs to 139 residues: Small ribosomal subunit protein uS9 (139 aa).

This sequence belongs to the universal ribosomal protein uS9 family.

The protein is Small ribosomal subunit protein uS9 of Coxiella burnetii (strain CbuK_Q154) (Coxiella burnetii (strain Q154)).